The following is a 200-amino-acid chain: MIKLIVGLGNPGAEYTATRHNAGFWLIDQLAREAGTTLRDERRFHGFYAKARLYGEEVHLLEPMTYMNRSGQSVVALAHFFKILPDQILVAHDELDLPPGTVKLKLGGGSGGHNGLKDISAHLSTQQYWRLRIGIGHPRDLIPDSARAGAKPDVANFVLKPPRKEEQDLIDASIERALAVMPVVVKGELERAMMQLHRNP.

Residue Y15 participates in tRNA binding. Catalysis depends on H20, which acts as the Proton acceptor. Residues Y66, N68, and N114 each contribute to the tRNA site.

This sequence belongs to the PTH family. Monomer.

It is found in the cytoplasm. It catalyses the reaction an N-acyl-L-alpha-aminoacyl-tRNA + H2O = an N-acyl-L-amino acid + a tRNA + H(+). In terms of biological role, hydrolyzes ribosome-free peptidyl-tRNAs (with 1 or more amino acids incorporated), which drop off the ribosome during protein synthesis, or as a result of ribosome stalling. Its function is as follows. Catalyzes the release of premature peptidyl moieties from peptidyl-tRNA molecules trapped in stalled 50S ribosomal subunits, and thus maintains levels of free tRNAs and 50S ribosomes. This is Peptidyl-tRNA hydrolase from Paraburkholderia phymatum (strain DSM 17167 / CIP 108236 / LMG 21445 / STM815) (Burkholderia phymatum).